Reading from the N-terminus, the 1043-residue chain is Unconventional myosin-Ia (1043 aa).

A Myosin motor domain is found at 8–694; sequence VGVEDLVLLE…TLFYLEEQRR (687 aa). Position 101-108 (101-108) interacts with ATP; that stretch reads GESGAGKT. Residues 571–593 form an actin-binding region; the sequence is VTTLMKNLYSKNPNYIRCIKPNE. IQ domains lie at 697–719, 720–742, and 743–772; these read LQQLATLIQKTYRGWRCRTHYQL, MRKSQIVISSWFRGNMQKKHYRK, and MKASALLIQAFVRGWKARKNYRKYFRSGAA. A TH1 domain is found at 858–1042; the sequence is KASYPQSVPI…KGSRCLEVTV (185 aa).

The protein belongs to the TRAFAC class myosin-kinesin ATPase superfamily. Myosin family. Post-translationally, phosphorylated by ALPK1.

Functionally, involved in directing the movement of organelles along actin filaments. The sequence is that of Unconventional myosin-Ia (MYO1A) from Bos taurus (Bovine).